Here is a 396-residue protein sequence, read N- to C-terminus: Probable circularly permuted 1,3-beta-glucanase YJL171C (396 aa).

The N-terminal stretch at M1–A19 is a signal peptide. N51, N99, N122, N146, N174, N219, and N249 each carry an N-linked (GlcNAc...) asparagine glycan. Positions E259–E264 match the ExDxxE motif motif. 4 N-linked (GlcNAc...) asparagine glycosylation sites follow: N267, N300, N328, and N346. The GPI-anchor amidated asparagine moiety is linked to residue N368. Residues G369–I396 constitute a propeptide, removed in mature form.

The protein belongs to the PGA52 family. Post-translationally, extensively N-glycosylated.

The protein localises to the cell membrane. The catalysed reaction is Hydrolysis of (1-&gt;3)-beta-D-glucosidic linkages in (1-&gt;3)-beta-D-glucans.. Its function is as follows. Probable circularly permuted 1,3-beta-glucanase involved in cell wall modification through beta-1,3-glucan network alterations such as increased branching or remodeling. This Saccharomyces cerevisiae (strain ATCC 204508 / S288c) (Baker's yeast) protein is Probable circularly permuted 1,3-beta-glucanase YJL171C (TOH1).